The sequence spans 776 residues: Kinesin-like protein KIN-8A (776 aa).

Disordered regions lie at residues 1–31 (MPVS…RGGA) and 80–135 (VGEV…KSSH). Residues 7 to 26 (ASAAGGQPWSSAAPAPASAP) are compositionally biased toward low complexity. Residues 123–132 (PPPPPAPPPK) are compositionally biased toward pro residues. The region spanning 205 to 534 (RIMVFVRLRP…LHWADRAKEI (330 aa)) is the Kinesin motor domain. 297–304 (GATGAGKT) contributes to the ATP binding site. Residues 554-592 (TDQAKLVLELQKENSELRQQLARQQQKLLTVQAQTLASN) are a coiled coil. The segment at 590–611 (ASNASPQQSPAPSAQISTPCST) is disordered. The span at 593-604 (ASPQQSPAPSAQ) shows a compositional bias: low complexity. Residues 634–671 (AAENAQVRDLQRKVKAMEAEIEKMKKEHLLQLKQKDEF) are a coiled coil.

This sequence belongs to the TRAFAC class myosin-kinesin ATPase superfamily. Kinesin family. KIN-8 subfamily.

The protein is Kinesin-like protein KIN-8A of Oryza sativa subsp. japonica (Rice).